The chain runs to 250 residues: tRNA (guanine-N(1)-)-methyltransferase (250 aa).

S-adenosyl-L-methionine-binding positions include G116 and 136–141 (IGDYVL).

The protein belongs to the RNA methyltransferase TrmD family. In terms of assembly, homodimer.

Its subcellular location is the cytoplasm. The catalysed reaction is guanosine(37) in tRNA + S-adenosyl-L-methionine = N(1)-methylguanosine(37) in tRNA + S-adenosyl-L-homocysteine + H(+). Functionally, specifically methylates guanosine-37 in various tRNAs. This Pseudomonas fluorescens (strain SBW25) protein is tRNA (guanine-N(1)-)-methyltransferase.